The following is a 96-amino-acid chain: Glutamyl-tRNA(Gln) amidotransferase subunit C (96 aa).

Belongs to the GatC family. In terms of assembly, heterotrimer of A, B and C subunits.

The catalysed reaction is L-glutamyl-tRNA(Gln) + L-glutamine + ATP + H2O = L-glutaminyl-tRNA(Gln) + L-glutamate + ADP + phosphate + H(+). It catalyses the reaction L-aspartyl-tRNA(Asn) + L-glutamine + ATP + H2O = L-asparaginyl-tRNA(Asn) + L-glutamate + ADP + phosphate + 2 H(+). Its function is as follows. Allows the formation of correctly charged Asn-tRNA(Asn) or Gln-tRNA(Gln) through the transamidation of misacylated Asp-tRNA(Asn) or Glu-tRNA(Gln) in organisms which lack either or both of asparaginyl-tRNA or glutaminyl-tRNA synthetases. The reaction takes place in the presence of glutamine and ATP through an activated phospho-Asp-tRNA(Asn) or phospho-Glu-tRNA(Gln). The chain is Glutamyl-tRNA(Gln) amidotransferase subunit C from Nostoc sp. (strain PCC 7120 / SAG 25.82 / UTEX 2576).